Here is a 1638-residue protein sequence, read N- to C-terminus: DNA polymerase III PolC-type (1638 aa).

The segment at 193–212 (SEIKKQRSEERESKNTREAK) is disordered. The segment covering 194 to 212 (EIKKQRSEERESKNTREAK) has biased composition (basic and acidic residues). Residues 596–752 (YVVFDVETTG…FDAEATGRLL (157 aa)) enclose the Exonuclease domain.

This sequence belongs to the DNA polymerase type-C family. PolC subfamily.

The protein resides in the cytoplasm. The catalysed reaction is DNA(n) + a 2'-deoxyribonucleoside 5'-triphosphate = DNA(n+1) + diphosphate. Its function is as follows. Required for replicative DNA synthesis. This DNA polymerase also exhibits 3' to 5' exonuclease activity. The protein is DNA polymerase III PolC-type of Lactococcus lactis subsp. lactis (strain IL1403) (Streptococcus lactis).